We begin with the raw amino-acid sequence, 129 residues long: M-zodatoxin-Lt8c (129 aa).

The N-terminal stretch at 1–20 (MKYFVVALALVAAFACIAES) is a signal peptide. A propeptide spanning residues 21 to 60 (KPAESEHELAEVEEENELADLEDAVWLEHLADLSDLEEAR) is cleaved from the precursor. The Processing quadruplet motif signature appears at 57-60 (EEAR).

Post-translationally, cleavage of the propeptide depends on the processing quadruplet motif (XXXR, with at least one of X being E). Expressed by the venom gland.

Its subcellular location is the secreted. Its function is as follows. Insecticidal, cytolytic and antimicrobial peptide. Forms voltage-dependent, ion-permeable channels in membranes. At high concentration causes cell membrane lysis. This Lachesana tarabaevi (Spider) protein is M-zodatoxin-Lt8c (cit 1-3).